Reading from the N-terminus, the 917-residue chain is Hexokinase-2 (917 aa).

Methionine 1 is subject to N-acetylmethionine. The segment at 1 to 16 (MIASHLLAYFFTELNH) is mitochondrial-binding peptide (MBP). Hexokinase domains are found at residues 16–458 (HDQV…MVTA) and 464–906 (ADQH…LITA). ATP is bound by residues arginine 30 and 84 to 89 (DLGGTN). The segment at 73 to 207 (DGTEHGEFLA…DFDIDIVAVV (135 aa)) is hexokinase small subdomain 1. Residue 84 to 88 (DLGGT) participates in D-glucose 6-phosphate binding. D-glucose is bound by residues 155–156 (SF), 172–173 (TK), and 208–209 (ND). Residues 208-447 (NDTVGTMMTC…CDVRFLRSED (240 aa)) are hexokinase large subdomain 1. Positions 209 and 232 each coordinate D-glucose 6-phosphate. Residues asparagine 235, glutamate 260, and 291–294 (QLFE) contribute to the D-glucose site. 413–415 (DGS) is a D-glucose 6-phosphate binding site. 425 to 426 (KR) serves as a coordination point for ATP. Residues serine 449 and 532–536 (DLGGT) contribute to the D-glucose 6-phosphate site. The hexokinase small subdomain 2 stretch occupies residues 521–655 (DGTEKGDFLA…EFDLDVVAVV (135 aa)). 532–537 (DLGGTN) is an ATP binding site. D-glucose is bound by residues 603–604 (SF), 620–621 (TK), and 656–657 (ND). The tract at residues 656-895 (NDTVGTMMTC…CDVSFLQSED (240 aa)) is hexokinase large subdomain 2. The D-glucose 6-phosphate site is built by aspartate 657 and threonine 680. Residue threonine 680 coordinates ATP. Residues 682 to 683 (SN), glutamate 708, and 739 to 742 (QRFE) each bind D-glucose. ATP is bound by residues 747–748 (GM), 784–788 (TKFLS), and 863–867 (TLYKL). D-glucose 6-phosphate contacts are provided by residues 861–863 (DGT) and serine 897.

The protein belongs to the hexokinase family. As to quaternary structure, monomer. Interacts with TIGAR; the interaction increases hexokinase activity in a hypoxia- and HIF1A-dependent manner. Predominant hexokinase isozyme expressed in insulin-responsive tissues such as skeletal muscle.

The protein resides in the mitochondrion outer membrane. It localises to the cytoplasm. The protein localises to the cytosol. The catalysed reaction is a D-hexose + ATP = a D-hexose 6-phosphate + ADP + H(+). It catalyses the reaction D-fructose + ATP = D-fructose 6-phosphate + ADP + H(+). The enzyme catalyses D-glucose + ATP = D-glucose 6-phosphate + ADP + H(+). The protein operates within carbohydrate metabolism; hexose metabolism. It participates in carbohydrate degradation; glycolysis; D-glyceraldehyde 3-phosphate and glycerone phosphate from D-glucose: step 1/4. Hexokinase activity is specifically inhibited by 2,6-disubstituted glucosamines. Catalyzes the phosphorylation of hexose, such as D-glucose and D-fructose, to hexose 6-phosphate (D-glucose 6-phosphate and D-fructose 6-phosphate, respectively). Mediates the initial step of glycolysis by catalyzing phosphorylation of D-glucose to D-glucose 6-phosphate. Plays a key role in maintaining the integrity of the outer mitochondrial membrane by preventing the release of apoptogenic molecules from the intermembrane space and subsequent apoptosis. This Homo sapiens (Human) protein is Hexokinase-2.